The primary structure comprises 313 residues: Adhesin MafA 2 (313 aa).

The N-terminal stretch at 1 to 14 (MKTLLLLIPLVLTA) is a signal peptide. Cys-15 carries the N-palmitoyl cysteine lipid modification. Cys-15 carries the S-diacylglycerol cysteine lipid modification. A compositionally biased stretch (polar residues) spans 282–297 (GDTTAQNRPDFKQNNG). The disordered stretch occupies residues 282–313 (GDTTAQNRPDFKQNNGKKPDVGNEVIRRRKGG).

The protein belongs to the MafA family.

Its subcellular location is the cell outer membrane. This chain is Adhesin MafA 2 (mafA2), found in Neisseria meningitidis serogroup A / serotype 4A (strain DSM 15465 / Z2491).